The primary structure comprises 347 residues: MGARGAPSRRRQAGRRPRYLPTGSFPFLLLLLLLCIQLGGGQKKKENLLAEKVEQLMEWSSRRSVFRMNGDKFRKFIKAPPRNYSMIVMFTALQPQRQCSVCRLANEEYQILANSWRYSSAFCNKLFFSKVDYDEGTDIFQQLNINSAPTFMHFPPKGRPKRADTFDLQRIGFGAEQLAKWIADRTDVHIRVFRPPNYSGTIALALLVSLVGGLLYLRRNNLEFIYNKTGWAMVSLCIVFAMTSGQMWNHIRGPPYAHKNPHNGQVSYIHGSSQVQFVAESHIILVLNAAITMGMDLLNEAATSKGDVGKRRIICLVGLGLVVFFFSFLLSIFRSKYHGYPYSFLIK.

Residues 1–41 (MGARGAPSRRRQAGRRPRYLPTGSFPFLLLLLLLCIQLGGG) form the signal peptide. The Lumenal segment spans residues 42–196 (QKKKENLLAE…DVHIRVFRPP (155 aa)). In terms of domain architecture, Thioredoxin spans 59-187 (WSSRRSVFRM…LAKWIADRTD (129 aa)). Asn-83 carries an N-linked (GlcNAc...) asparagine glycan. Cys-99 and Cys-102 are oxidised to a cystine. The helical transmembrane segment at 197 to 217 (NYSGTIALALLVSLVGGLLYL) threads the bilayer. At 218–221 (RRNN) the chain is on the cytoplasmic side. A helical membrane pass occupies residues 222–242 (LEFIYNKTGWAMVSLCIVFAM). Topologically, residues 243-276 (TSGQMWNHIRGPPYAHKNPHNGQVSYIHGSSQVQ) are lumenal. A helical transmembrane segment spans residues 277-297 (FVAESHIILVLNAAITMGMDL). The Cytoplasmic portion of the chain corresponds to 298 to 312 (LNEAATSKGDVGKRR). The chain crosses the membrane as a helical span at residues 313-333 (IICLVGLGLVVFFFSFLLSIF). Residues 334 to 347 (RSKYHGYPYSFLIK) lie on the Lumenal side of the membrane.

This sequence belongs to the OST3/OST6 family. As to quaternary structure, accessory component of the STT3B-containing form of the oligosaccharyltransferase (OST) complex. OST exists in two different complex forms which contain common core subunits RPN1, RPN2, OST48, OST4, DAD1 and TMEM258, either STT3A or STT3B as catalytic subunits, and form-specific accessory subunits. OST can form stable complexes with the Sec61 complex or with both the Sec61 and TRAP complexes. The association of TUSC3 or MAGT1 with the STT3B-containing complex seems to be mutually exclusvice.

The protein localises to the endoplasmic reticulum membrane. It participates in protein modification; protein glycosylation. Acts as accessory component of the N-oligosaccharyl transferase (OST) complex which catalyzes the transfer of a high mannose oligosaccharide from a lipid-linked oligosaccharide donor to an asparagine residue within an Asn-X-Ser/Thr consensus motif in nascent polypeptide chains. Involved in N-glycosylation of STT3B-dependent substrates. Specifically required for the glycosylation of a subset of acceptor sites that are near cysteine residues; in this function seems to act redundantly with MAGT1. In its oxidized form proposed to form transient mixed disulfides with a glycoprotein substrate to facilitate access of STT3B to the unmodified acceptor site. Also has oxidoreductase-independent functions in the STT3B-containing OST complex possibly involving substrate recognition. Could indirectly play a role in Mg(2+) transport. The sequence is that of Dolichyl-diphosphooligosaccharide--protein glycosyltransferase subunit TUSC3 (TUSC3) from Bos taurus (Bovine).